The chain runs to 311 residues: 4-hydroxy-tetrahydrodipicolinate synthase (311 aa).

Position 51 (Thr-51) interacts with pyruvate. Tyr-140 acts as the Proton donor/acceptor in catalysis. Residue Lys-168 is the Schiff-base intermediate with substrate of the active site. Ile-209 contributes to the pyruvate binding site.

Belongs to the DapA family. As to quaternary structure, homotetramer; dimer of dimers.

It is found in the cytoplasm. It carries out the reaction L-aspartate 4-semialdehyde + pyruvate = (2S,4S)-4-hydroxy-2,3,4,5-tetrahydrodipicolinate + H2O + H(+). Its pathway is amino-acid biosynthesis; L-lysine biosynthesis via DAP pathway; (S)-tetrahydrodipicolinate from L-aspartate: step 3/4. In terms of biological role, catalyzes the condensation of (S)-aspartate-beta-semialdehyde [(S)-ASA] and pyruvate to 4-hydroxy-tetrahydrodipicolinate (HTPA). This Streptococcus pneumoniae (strain ATCC 700669 / Spain 23F-1) protein is 4-hydroxy-tetrahydrodipicolinate synthase.